A 367-amino-acid chain; its full sequence is MGAHPTAHGPRTLEDGSPTCKLIAWEVTRSCNLACKHCRAEAHMEPYPGEFSTDEAKALIDTFPDVGNPIIIFTGGDPMMRGDVYELIAYATDKGLRCVMSPNGTLITPEHAQRMKASGVQRCSISIDGPDAASHDAFRGVPGAFEQSMRGIGYLRDAGIEFQINTTVTRDNLHSFKDIFKLCERIGAVAWHIFLLVPTGRAAGLSDQVISAAEYEEVLNWFYDFRKTTSMHLKATCAPHYYRIMRQRAKEEGVSVTPDNFGMDAMTRGCLGGTGFCFISHTGQVQPCGYLELDCGNVRNTPFPEIWRKSEHFRQFRTQEEYTGKCGPCEYHKVCGGCRARAYNMSGDHMAEEPLCSYKPRRMTPCR.

One can recognise a Radical SAM core domain in the interval 15–238; sequence DGSPTCKLIA…TSMHLKATCA (224 aa). Residues Cys-31, Cys-35, and Cys-38 each contribute to the [4Fe-4S] cluster site.

The protein belongs to the radical SAM superfamily. It depends on [4Fe-4S] cluster as a cofactor.

The enzyme catalyses Fe-coproporphyrin III + 2 S-adenosyl-L-methionine = heme b + 2 5'-deoxyadenosine + 2 L-methionine + 2 CO2. Its pathway is porphyrin-containing compound metabolism; protoheme biosynthesis. Involved in siroheme-dependent heme b biosynthesis. Catalyzes the conversion of Fe-coproporphyrin III into heme by the oxidative decarboxylation of two propionate side chains. The chain is AdoMet-dependent heme synthase from Nitratidesulfovibrio vulgaris (strain ATCC 29579 / DSM 644 / CCUG 34227 / NCIMB 8303 / VKM B-1760 / Hildenborough) (Desulfovibrio vulgaris).